A 338-amino-acid polypeptide reads, in one-letter code: Ketol-acid reductoisomerase (NADP(+)) (338 aa).

In terms of domain architecture, KARI N-terminal Rossmann spans 1-181; it reads MKVFYDKDAD…GGGRAGIIET (181 aa). Residues 24–27, Arg47, and Ser52 contribute to the NADP(+) site; that span reads YGSQ. Residue His107 is part of the active site. Gly133 serves as a coordination point for NADP(+). Residues 182–327 form the KARI C-terminal knotted domain; that stretch reads NFREETETDL…SKLRAMMPWI (146 aa). Positions 190, 194, 226, and 230 each coordinate Mg(2+). Ser251 contacts substrate.

The protein belongs to the ketol-acid reductoisomerase family. Mg(2+) serves as cofactor.

It carries out the reaction (2R)-2,3-dihydroxy-3-methylbutanoate + NADP(+) = (2S)-2-acetolactate + NADPH + H(+). The enzyme catalyses (2R,3R)-2,3-dihydroxy-3-methylpentanoate + NADP(+) = (S)-2-ethyl-2-hydroxy-3-oxobutanoate + NADPH + H(+). It participates in amino-acid biosynthesis; L-isoleucine biosynthesis; L-isoleucine from 2-oxobutanoate: step 2/4. It functions in the pathway amino-acid biosynthesis; L-valine biosynthesis; L-valine from pyruvate: step 2/4. Involved in the biosynthesis of branched-chain amino acids (BCAA). Catalyzes an alkyl-migration followed by a ketol-acid reduction of (S)-2-acetolactate (S2AL) to yield (R)-2,3-dihydroxy-isovalerate. In the isomerase reaction, S2AL is rearranged via a Mg-dependent methyl migration to produce 3-hydroxy-3-methyl-2-ketobutyrate (HMKB). In the reductase reaction, this 2-ketoacid undergoes a metal-dependent reduction by NADPH to yield (R)-2,3-dihydroxy-isovalerate. This Burkholderia mallei (strain NCTC 10229) protein is Ketol-acid reductoisomerase (NADP(+)).